A 366-amino-acid polypeptide reads, in one-letter code: Putative agmatine deiminase (366 aa).

Cys-357 (amidino-cysteine intermediate) is an active-site residue.

The protein belongs to the agmatine deiminase family.

It catalyses the reaction agmatine + H2O = N-carbamoylputrescine + NH4(+). In Lactococcus lactis subsp. lactis (strain IL1403) (Streptococcus lactis), this protein is Putative agmatine deiminase.